A 149-amino-acid chain; its full sequence is UPF0260 protein Pfl01_1392 (149 aa).

It belongs to the UPF0260 family.

This is UPF0260 protein Pfl01_1392 from Pseudomonas fluorescens (strain Pf0-1).